The sequence spans 607 residues: Glutamyl-tRNA(Gln) amidotransferase subunit E (607 aa).

Residues 399-428 (GVPEETRGANPDGTTRFLRPRPGAARMYPE) are disordered.

The protein belongs to the GatB/GatE family. GatE subfamily. Heterodimer of GatD and GatE.

The catalysed reaction is L-glutamyl-tRNA(Gln) + L-glutamine + ATP + H2O = L-glutaminyl-tRNA(Gln) + L-glutamate + ADP + phosphate + H(+). Functionally, allows the formation of correctly charged Gln-tRNA(Gln) through the transamidation of misacylated Glu-tRNA(Gln) in organisms which lack glutaminyl-tRNA synthetase. The reaction takes place in the presence of glutamine and ATP through an activated gamma-phospho-Glu-tRNA(Gln). The GatDE system is specific for glutamate and does not act on aspartate. This Pyrobaculum neutrophilum (strain DSM 2338 / JCM 9278 / NBRC 100436 / V24Sta) (Thermoproteus neutrophilus) protein is Glutamyl-tRNA(Gln) amidotransferase subunit E.